The following is a 236-amino-acid chain: Phosphoribosylaminoimidazole-succinocarboxamide synthase (236 aa).

Belongs to the SAICAR synthetase family.

It catalyses the reaction 5-amino-1-(5-phospho-D-ribosyl)imidazole-4-carboxylate + L-aspartate + ATP = (2S)-2-[5-amino-1-(5-phospho-beta-D-ribosyl)imidazole-4-carboxamido]succinate + ADP + phosphate + 2 H(+). Its pathway is purine metabolism; IMP biosynthesis via de novo pathway; 5-amino-1-(5-phospho-D-ribosyl)imidazole-4-carboxamide from 5-amino-1-(5-phospho-D-ribosyl)imidazole-4-carboxylate: step 1/2. This Campylobacter jejuni subsp. doylei (strain ATCC BAA-1458 / RM4099 / 269.97) protein is Phosphoribosylaminoimidazole-succinocarboxamide synthase.